The chain runs to 351 residues: MLKFIQNNREGTALLAILTLFALLGIIDRNYFSLQTFTMIFSSAQILILLAIGATLVMLTRNIDVSVGSITGLCAVTVGMALNAGFGLVASCLFALLVGMVAGFFNGILVTWLRIPAIVATLGTLGLYRGLMLLLTGGKWIEGLPADLKSLSTPILFSISPIGWLTMLLILSMAWLLGNTAFGRSFYATGDNLQGARQLGVRTDSIRIFAFSMNGVMAALAGIVFASQIGFIPNQTGNGLEMKAIAACVLGGISLLGGTGTIIGAILGAFLLTQIDSVLVLLRLPAWWNDFIAGLVLLGVLVFDGRLRCAVERNIRQQKYARFTAQAIISDKKPTVSDNNPAASNKKKAAL.

9 consecutive transmembrane segments (helical) span residues 14–34 (LLAI…YFSL), 39–59 (MIFS…LVML), 70–90 (ITGL…GLVA), 93–113 (LFAL…VTWL), 115–135 (IPAI…MLLL), 155–175 (ILFS…SMAW), 213–233 (MNGV…GFIP), 252–272 (GISL…AFLL), and 284–304 (LPAW…LVFD).

Belongs to the binding-protein-dependent transport system permease family. AraH/RbsC subfamily. In terms of assembly, the complex is composed of two ATP-binding proteins (LsrA), two transmembrane proteins (LsrC and LsrD) and a solute-binding protein (LsrB).

It localises to the cell inner membrane. In terms of biological role, part of the ABC transporter complex LsrABCD involved in autoinducer 2 (AI-2) import. Probably responsible for the translocation of the substrate across the membrane. This chain is Autoinducer 2 import system permease protein LsrC (lsrC), found in Yersinia pseudotuberculosis serotype IB (strain PB1/+).